The sequence spans 621 residues: Microbial serine proteinase (621 aa).

The N-terminal stretch at 1–24 is a signal peptide; it reads MRKTSLALAISALLSALPIASVQA. Residues 68-440 form the Peptidase S8 domain; sequence PRGGMAGNDL…FGLVDVNKTQ (373 aa). The active-site Charge relay system is aspartate 98. The disordered stretch occupies residues 114-133; the sequence is PGSKNVVTGGSDPTPTDPDR. Catalysis depends on charge relay system residues histidine 137 and serine 354. The P/Homo B domain maps to 454–619; that stretch reads AVALAKGKGN…GYSVLGHDAA (166 aa). Residues 457 to 485 form a disordered region; the sequence is LAKGKGNGRSPSAPSRYVGSSPTRSSTQV. Over residues 465–485 the composition is skewed to polar residues; that stretch reads RSPSAPSRYVGSSPTRSSTQV.

The protein belongs to the peptidase S8 family.

Its function is as follows. Agent of furonculosis. This Aeromonas salmonicida protein is Microbial serine proteinase (aspA).